Here is a 143-residue protein sequence, read N- to C-terminus: NADH-quinone oxidoreductase subunit A (143 aa).

3 helical membrane-spanning segments follow: residues phenylalanine 8–threonine 28, phenylalanine 63–tryptophan 83, and leucine 90–valine 110.

This sequence belongs to the complex I subunit 3 family. In terms of assembly, NDH-1 is composed of 14 different subunits. Subunits NuoA, H, J, K, L, M, N constitute the membrane sector of the complex.

Its subcellular location is the cell inner membrane. The enzyme catalyses a quinone + NADH + 5 H(+)(in) = a quinol + NAD(+) + 4 H(+)(out). Its function is as follows. NDH-1 shuttles electrons from NADH, via FMN and iron-sulfur (Fe-S) centers, to quinones in the respiratory chain. The immediate electron acceptor for the enzyme in this species is believed to be a menaquinone. Couples the redox reaction to proton translocation (for every two electrons transferred, four hydrogen ions are translocated across the cytoplasmic membrane), and thus conserves the redox energy in a proton gradient. This Chlorobium phaeobacteroides (strain DSM 266 / SMG 266 / 2430) protein is NADH-quinone oxidoreductase subunit A.